Consider the following 81-residue polypeptide: Photosystem I iron-sulfur center (81 aa).

4Fe-4S ferredoxin-type domains are found at residues 2–31 (SHSV…MIPW) and 39–68 (IASA…VRVY). Residues cysteine 11, cysteine 14, cysteine 17, cysteine 21, cysteine 48, cysteine 51, cysteine 54, and cysteine 58 each contribute to the [4Fe-4S] cluster site.

The eukaryotic PSI reaction center is composed of at least 11 subunits. It depends on [4Fe-4S] cluster as a cofactor.

The protein localises to the plastid. Its subcellular location is the chloroplast thylakoid membrane. It carries out the reaction reduced [plastocyanin] + hnu + oxidized [2Fe-2S]-[ferredoxin] = oxidized [plastocyanin] + reduced [2Fe-2S]-[ferredoxin]. Its function is as follows. Apoprotein for the two 4Fe-4S centers FA and FB of photosystem I (PSI); essential for photochemical activity. FB is the terminal electron acceptor of PSI, donating electrons to ferredoxin. The C-terminus interacts with PsaA/B/D and helps assemble the protein into the PSI complex. Required for binding of PsaD and PsaE to PSI. PSI is a plastocyanin-ferredoxin oxidoreductase, converting photonic excitation into a charge separation, which transfers an electron from the donor P700 chlorophyll pair to the spectroscopically characterized acceptors A0, A1, FX, FA and FB in turn. This chain is Photosystem I iron-sulfur center, found in Acorus calamus (Sweet flag).